The following is a 134-amino-acid chain: MTLNLCVLTPNRMIWDSEVKEIILSTNSGQIGVLPNHAPIATAVDIGLLRIRLKDRWLTVALMGGFARISNNEITILGNGAEISTDIDPQEAQQTLEIAEANLSKAEGKRQAIEANLALRRARTRVEAIKVISS.

Belongs to the ATPase epsilon chain family. As to quaternary structure, F-type ATPases have 2 components, CF(1) - the catalytic core - and CF(0) - the membrane proton channel. CF(1) has five subunits: alpha(3), beta(3), gamma(1), delta(1), epsilon(1). CF(0) has three main subunits: a, b and c.

Its subcellular location is the plastid. The protein resides in the chloroplast thylakoid membrane. Produces ATP from ADP in the presence of a proton gradient across the membrane. The polypeptide is ATP synthase epsilon chain, chloroplastic (Phalaenopsis aphrodite subsp. formosana (Moth orchid)).